The primary structure comprises 263 residues: Palmitoyltransferase ZDHHC22 (263 aa).

At 1-9 the chain is on the cytoplasmic side; the sequence is MLALRLLNV. A helical membrane pass occupies residues 10 to 30; it reads VAPAYFLCISLVTFVLQLFLF. Residues 31 to 48 lie on the Lumenal side of the membrane; sequence LPSMREDPTATPLFSPAV. The chain crosses the membrane as a helical span at residues 49–69; that stretch reads LHGALFLFLSANALGNYVLVI. Topologically, residues 70-125 are cytoplasmic; that stretch reads QNSPDDLGTCQGTMSQRPQCPPPSTHFCRVCSRVTLRHDHHCFFTGNCIGSRNMRN. The DHHC domain maps to 91–131; the sequence is PPSTHFCRVCSRVTLRHDHHCFFTGNCIGSRNMRNFILFCL. Cysteine 111 serves as the catalytic S-palmitoyl cysteine intermediate. Helical transmembrane passes span 126-146 and 147-167; these read FILF…AGVA and YISA…TLLP. The Cytoplasmic segment spans residues 168-182; the sequence is TSISQFFSGAVLGSD. A helical transmembrane segment spans residues 183–203; it reads MFVILMLYLWFAVGLACAGFC. Over 204–263 the chain is Lumenal; that stretch reads CHQLLLILRGQTRYQVRKGMAVRARPWRKNLQEVFGKRWLLGLLVPMFNVGTESSKQQDK.

This sequence belongs to the DHHC palmitoyltransferase family. In terms of assembly, interacts with CNN3.

It is found in the endoplasmic reticulum membrane. The protein localises to the golgi apparatus membrane. The catalysed reaction is L-cysteinyl-[protein] + hexadecanoyl-CoA = S-hexadecanoyl-L-cysteinyl-[protein] + CoA. Functionally, palmitoyltransferase that could catalyze the addition of palmitate onto various protein substrates and be involved in a variety of cellular processes. Catalyzes the palmitoylation of KCNMA1, regulating localization of KCNMA1 to the plasma membrane. Might also mediate palmitoylation of CNN3. This is Palmitoyltransferase ZDHHC22 from Mus musculus (Mouse).